We begin with the raw amino-acid sequence, 224 residues long: uncharacterized protein (224 aa).

A run of 4 helical transmembrane segments spans residues 39–59 (LICLIAGGVQVFMGGYIFYSI), 70–90 (YLSLSVVGFYACLTGLLILFA), 103–123 (VFVFLCNGLSRGIIYILIGAI), and 139–159 (MHIGLVCIAGGVVSIIEFLIT).

The protein localises to the membrane. This is an uncharacterized protein from Dictyostelium discoideum (Social amoeba).